The sequence spans 124 residues: Small ribosomal subunit protein uS12 (124 aa).

The disordered stretch occupies residues 1–29 (MATINQLVRKGRKRRVAKSNVPALEASPQ). Position 89 is a 3-methylthioaspartic acid (aspartate 89). Positions 101-124 (AADTAGVDKRRQGRSKYGAKRPKS) are disordered. Basic residues predominate over residues 111–124 (RQGRSKYGAKRPKS).

Belongs to the universal ribosomal protein uS12 family. In terms of assembly, part of the 30S ribosomal subunit. Contacts proteins S8 and S17. May interact with IF1 in the 30S initiation complex.

With S4 and S5 plays an important role in translational accuracy. In terms of biological role, interacts with and stabilizes bases of the 16S rRNA that are involved in tRNA selection in the A site and with the mRNA backbone. Located at the interface of the 30S and 50S subunits, it traverses the body of the 30S subunit contacting proteins on the other side and probably holding the rRNA structure together. The combined cluster of proteins S8, S12 and S17 appears to hold together the shoulder and platform of the 30S subunit. In Alkalilimnicola ehrlichii (strain ATCC BAA-1101 / DSM 17681 / MLHE-1), this protein is Small ribosomal subunit protein uS12.